We begin with the raw amino-acid sequence, 134 residues long: MWSDPIADMLTRIRNANMVFKEYTDIPASNLKKKICEILKREGFIADYKYIEDGKQGILRVYLKYKGGRKNRERVIHGIVRVSHAGRRIYVDKDHIPKVKNGLGIAILTTSKGVLTDKEARQLGVGGEVIAYVW.

Belongs to the universal ribosomal protein uS8 family. Part of the 30S ribosomal subunit. Contacts proteins S5 and S12.

Its function is as follows. One of the primary rRNA binding proteins, it binds directly to 16S rRNA central domain where it helps coordinate assembly of the platform of the 30S subunit. This chain is Small ribosomal subunit protein uS8, found in Thermotoga maritima (strain ATCC 43589 / DSM 3109 / JCM 10099 / NBRC 100826 / MSB8).